A 153-amino-acid chain; its full sequence is MFQIGDNIVYPMHGAGIIEAIEEKEFLEEKQQYYVIRMSISNMTVMIPTSKILSSNIRPVTDILALKHIMHIFQHGESDRLLPWKQRYKINTDKIKTGEIQEGAEVVRDLMRMKKEKALNASEKKMLDNAYEFLISELEVIKGITEKQIKSFG.

Belongs to the CarD family.

In Bacillus subtilis (strain 168), this protein is Putative transcription factor YdeB (ydeB).